The sequence spans 660 residues: Pseudouridylate synthase 7 homolog (660 aa).

Residues methionine 1–serine 99 form a disordered region. Serine 7 carries the phosphoserine modification. The span at threonine 22 to valine 32 shows a compositional bias: basic and acidic residues. Residues glutamine 76–serine 99 are compositionally biased toward acidic residues. Serine 126 bears the Phosphoserine mark. The active-site Nucleophile is aspartate 293. Residues glycine 369–arginine 579 form the TRUD domain.

It belongs to the pseudouridine synthase TruD family. Interacts with SIRT1.

Its subcellular location is the nucleus. It catalyses the reaction a uridine in tRNA = a pseudouridine in tRNA. The enzyme catalyses uridine(13) in tRNA = pseudouridine(13) in tRNA. It carries out the reaction a uridine in mRNA = a pseudouridine in mRNA. Pseudouridylate synthase that catalyzes pseudouridylation of RNAs. Acts as a regulator of protein synthesis in embryonic stem cells by mediating pseudouridylation of RNA fragments derived from tRNAs (tRFs): pseudouridylated tRFs inhibit translation by targeting the translation initiation complex. Also catalyzes pseudouridylation of mRNAs: mediates pseudouridylation of mRNAs with the consensus sequence 5'-UGUAG-3'. Acts as a regulator of pre-mRNA splicing by mediating pseudouridylation of pre-mRNAs at locations associated with alternatively spliced regions. Pseudouridylation of pre-mRNAs near splice sites directly regulates mRNA splicing and mRNA 3'-end processing. In addition to mRNAs and tRNAs, binds other types of RNAs, such as snRNAs, Y RNAs and vault RNAs, suggesting that it can catalyze pseudouridylation of many RNA types. This Mus musculus (Mouse) protein is Pseudouridylate synthase 7 homolog.